A 309-amino-acid polypeptide reads, in one-letter code: Malate dehydrogenase (309 aa).

NAD(+)-binding positions include 9-14 and aspartate 33; that span reads GAGFVG. Positions 82 and 88 each coordinate substrate. NAD(+) contacts are provided by residues asparagine 95 and 118–120; that span reads VNN. Substrate-binding residues include asparagine 120 and arginine 151. Catalysis depends on histidine 175, which acts as the Proton acceptor.

The protein belongs to the LDH/MDH superfamily. MDH type 3 family.

The enzyme catalyses (S)-malate + NAD(+) = oxaloacetate + NADH + H(+). Functionally, catalyzes the reversible oxidation of malate to oxaloacetate. This Roseiflexus castenholzii (strain DSM 13941 / HLO8) protein is Malate dehydrogenase.